We begin with the raw amino-acid sequence, 141 residues long: Large ribosomal subunit protein uL13 (141 aa).

The protein belongs to the universal ribosomal protein uL13 family. Part of the 50S ribosomal subunit.

This protein is one of the early assembly proteins of the 50S ribosomal subunit, although it is not seen to bind rRNA by itself. It is important during the early stages of 50S assembly. This chain is Large ribosomal subunit protein uL13, found in Helicobacter pylori (strain Shi470).